A 123-amino-acid chain; its full sequence is Defensin beta 118 (123 aa).

The signal sequence occupies residues 1-19; sequence MKLLLLALPMLVLLPQVIP. Intrachain disulfides connect C27–C54, C34–C48, and C38–C55. The propeptide occupies 65–123; sequence VPTTSPTPLSDSTRGVIDDILTVRFTTDYFEVSSKKNMVEESEVGQGTQTSLPNVHHSS. The tract at residues 100–123 is disordered; the sequence is KNMVEESEVGQGTQTSLPNVHHSS. Positions 109-123 are enriched in polar residues; the sequence is GQGTQTSLPNVHHSS.

Belongs to the beta-defensin family. In terms of processing, the three-dimensional structure formed by the three intramolecular disulfide bridges is indispensable for antimicrobial activity.

It is found in the secreted. Host defense peptide that exhibits antimicrobial activity against both Gram-negative bacteria, such as E.coli and S.typhimurium, and Gram-positive bacteria, such as S.aureus and B.subtilis. Inhibits cell adhesion of E.coli on intestinal epithelial enterocytes. Causes rapid permeabilization of both the outer and inner membrane of E.coli, leading to morphological alterations on the bacterial surface. Binds to bacterial lipopolysaccharides (LPS) with high affinity, and may thereby be involved in immunoregulation through LPS neutralization. May contribute to epididymal innate immunity and protect the sperm against attack by microorganisms. This is Defensin beta 118 (DEFB118) from Pongo pygmaeus (Bornean orangutan).